A 274-amino-acid polypeptide reads, in one-letter code: Diaminopimelate epimerase (274 aa).

Substrate is bound by residues asparagine 11, glutamine 44, and asparagine 64. Cysteine 73 serves as the catalytic Proton donor. Substrate is bound by residues 74 to 75, asparagine 157, asparagine 190, and 208 to 209; these read GN and ER. Catalysis depends on cysteine 217, which acts as the Proton acceptor. Residue 218 to 219 coordinates substrate; the sequence is GS.

This sequence belongs to the diaminopimelate epimerase family. Homodimer.

The protein localises to the cytoplasm. The enzyme catalyses (2S,6S)-2,6-diaminopimelate = meso-2,6-diaminopimelate. It functions in the pathway amino-acid biosynthesis; L-lysine biosynthesis via DAP pathway; DL-2,6-diaminopimelate from LL-2,6-diaminopimelate: step 1/1. In terms of biological role, catalyzes the stereoinversion of LL-2,6-diaminopimelate (L,L-DAP) to meso-diaminopimelate (meso-DAP), a precursor of L-lysine and an essential component of the bacterial peptidoglycan. This Edwardsiella ictaluri (strain 93-146) protein is Diaminopimelate epimerase.